The sequence spans 436 residues: GTPase Der (436 aa).

EngA-type G domains follow at residues 4-167 (PVIA…PKIE) and 176-351 (IRFS…ESHS). Residues 10 to 17 (GRPNVGKS), 57 to 61 (DTGGI), 119 to 122 (NKVD), 182 to 189 (GRPNVGKS), 229 to 233 (DTAGM), and 294 to 297 (NKWD) contribute to the GTP site. Residues 352-436 (IRVQTNVLND…PIHIIARARD (85 aa)) enclose the KH-like domain.

The protein belongs to the TRAFAC class TrmE-Era-EngA-EngB-Septin-like GTPase superfamily. EngA (Der) GTPase family. Associates with the 50S ribosomal subunit.

GTPase that plays an essential role in the late steps of ribosome biogenesis. This is GTPase Der from Bacillus mycoides (strain KBAB4) (Bacillus weihenstephanensis).